Here is a 184-residue protein sequence, read N- to C-terminus: Large ribosomal subunit protein uL15 (184 aa).

The tract at residues 1-45 (MNLSSLRPAKGSVRNKKRVGRGQGSGNGTTAGKGNKGQQARSGYK) is disordered. Positions 21-35 (RGQGSGNGTTAGKGN) are enriched in gly residues.

It belongs to the universal ribosomal protein uL15 family. In terms of assembly, part of the 50S ribosomal subunit.

Functionally, binds to the 23S rRNA. This Chlorobium chlorochromatii (strain CaD3) protein is Large ribosomal subunit protein uL15.